A 92-amino-acid polypeptide reads, in one-letter code: UPF0223 protein SERP0684 (92 aa).

It belongs to the UPF0223 family.

The chain is UPF0223 protein SERP0684 from Staphylococcus epidermidis (strain ATCC 35984 / DSM 28319 / BCRC 17069 / CCUG 31568 / BM 3577 / RP62A).